Reading from the N-terminus, the 550-residue chain is Cochlin (550 aa).

Positions 1–24 (MWASWIPVLCLGVCLLLPPEPVGS) are cleaved as a signal peptide. Residues 28–121 (VPIPITCSTR…QMLSRWSASF (94 aa)) form the LCCL domain. Intrachain disulfides connect C34-C50 and C54-C74. A glycan (N-linked (GlcNAc...) asparagine) is linked at N100. Polar residues predominate over residues 128–139 (SGTQEATGQAVS). The tract at residues 128–158 (SGTQEATGQAVSTAHPATGKRLKKTPEKKTG) is disordered. VWFA domains follow at residues 165 to 350 (DIAF…VQKL) and 367 to 537 (NIAF…VSDV). N-linked (GlcNAc...) asparagine glycosylation is found at N221 and N436.

As to quaternary structure, monomer. May form homodimer. Interacts with type II collagen. Interacts with SLC44A2. Interacts with ANXA2. In terms of processing, N-glycosylated.

The protein resides in the secreted. It is found in the extracellular space. Functionally, plays a role in the control of cell shape and motility in the trabecular meshwork. This is Cochlin (COCH) from Bos taurus (Bovine).